Here is a 292-residue protein sequence, read N- to C-terminus: Acetylglutamate kinase (292 aa).

Substrate is bound by residues 64–65 (GG), Arg86, and Asn190.

It belongs to the acetylglutamate kinase family. ArgB subfamily.

The protein localises to the cytoplasm. It carries out the reaction N-acetyl-L-glutamate + ATP = N-acetyl-L-glutamyl 5-phosphate + ADP. The protein operates within amino-acid biosynthesis; L-arginine biosynthesis; N(2)-acetyl-L-ornithine from L-glutamate: step 2/4. In terms of biological role, catalyzes the ATP-dependent phosphorylation of N-acetyl-L-glutamate. This is Acetylglutamate kinase from Leptospira biflexa serovar Patoc (strain Patoc 1 / Ames).